The primary structure comprises 390 residues: 8-amino-7-oxononanoate synthase (390 aa).

Substrate is bound at residue R20. 107–108 (GF) contacts pyridoxal 5'-phosphate. Residue H132 coordinates substrate. Pyridoxal 5'-phosphate is bound by residues S179, 204-207 (DDAH), and 235-238 (TLSK). K238 is subject to N6-(pyridoxal phosphate)lysine. T352 contributes to the substrate binding site.

The protein belongs to the class-II pyridoxal-phosphate-dependent aminotransferase family. BioF subfamily. As to quaternary structure, homodimer. Pyridoxal 5'-phosphate is required as a cofactor.

It catalyses the reaction 6-carboxyhexanoyl-[ACP] + L-alanine + H(+) = (8S)-8-amino-7-oxononanoate + holo-[ACP] + CO2. Its pathway is cofactor biosynthesis; biotin biosynthesis. Catalyzes the decarboxylative condensation of pimeloyl-[acyl-carrier protein] and L-alanine to produce 8-amino-7-oxononanoate (AON), [acyl-carrier protein], and carbon dioxide. The sequence is that of 8-amino-7-oxononanoate synthase from Exiguobacterium sibiricum (strain DSM 17290 / CCUG 55495 / CIP 109462 / JCM 13490 / 255-15).